The chain runs to 548 residues: Thermosome subunit beta (548 aa).

It belongs to the TCP-1 chaperonin family. As to quaternary structure, forms a Heterooligomeric complex of two stacked eight-membered rings.

Functionally, molecular chaperone; binds unfolded polypeptides in vitro, and has a weak ATPase activity. This chain is Thermosome subunit beta (thsB), found in Aeropyrum pernix (strain ATCC 700893 / DSM 11879 / JCM 9820 / NBRC 100138 / K1).